An 88-amino-acid polypeptide reads, in one-letter code: Large ribosomal subunit protein bL31B (88 aa).

The protein belongs to the bacterial ribosomal protein bL31 family. Type B subfamily. Part of the 50S ribosomal subunit.

The chain is Large ribosomal subunit protein bL31B from Burkholderia orbicola (strain MC0-3).